A 262-amino-acid polypeptide reads, in one-letter code: Hydroxyethylthiazole kinase (262 aa).

Methionine 50 is a substrate binding site. ATP is bound by residues arginine 125 and threonine 171. Residue glycine 198 participates in substrate binding.

It belongs to the Thz kinase family. The cofactor is Mg(2+).

The enzyme catalyses 5-(2-hydroxyethyl)-4-methylthiazole + ATP = 4-methyl-5-(2-phosphooxyethyl)-thiazole + ADP + H(+). Its pathway is cofactor biosynthesis; thiamine diphosphate biosynthesis; 4-methyl-5-(2-phosphoethyl)-thiazole from 5-(2-hydroxyethyl)-4-methylthiazole: step 1/1. In terms of biological role, catalyzes the phosphorylation of the hydroxyl group of 4-methyl-5-beta-hydroxyethylthiazole (THZ). This Escherichia coli (strain K12 / MC4100 / BW2952) protein is Hydroxyethylthiazole kinase.